A 130-amino-acid chain; its full sequence is MAKRKVIKKKIVRKNIAKGIVYISATFNNTMVTVTDEMGNAIAWSSAGGLGFKGSKKSTPYAAQQAVEDAMNKAKEHGIKEVGIKVQGPGSGRETAVKSIGGVEGIKVLYLKDITPLAHNGCRPPKRRRV.

Belongs to the universal ribosomal protein uS11 family. Part of the 30S ribosomal subunit. Interacts with proteins S7 and S18. Binds to IF-3.

In terms of biological role, located on the platform of the 30S subunit, it bridges several disparate RNA helices of the 16S rRNA. Forms part of the Shine-Dalgarno cleft in the 70S ribosome. The polypeptide is Small ribosomal subunit protein uS11 (Campylobacter fetus subsp. fetus (strain 82-40)).